The following is a 413-amino-acid chain: Multifunctional CCA protein (413 aa).

Residues glycine 8 and arginine 11 each coordinate ATP. CTP is bound by residues glycine 8 and arginine 11. The Mg(2+) site is built by aspartate 21 and aspartate 23. ATP contacts are provided by arginine 91, arginine 143, and arginine 146. The CTP site is built by arginine 91, arginine 143, and arginine 146. The HD domain maps to 232 to 333; sequence TGVHVMMVID…VRLLERADAL (102 aa).

Belongs to the tRNA nucleotidyltransferase/poly(A) polymerase family. Bacterial CCA-adding enzyme type 1 subfamily. As to quaternary structure, monomer. Can also form homodimers and oligomers. It depends on Mg(2+) as a cofactor. The cofactor is Ni(2+).

It catalyses the reaction a tRNA precursor + 2 CTP + ATP = a tRNA with a 3' CCA end + 3 diphosphate. The catalysed reaction is a tRNA with a 3' CCA end + 2 CTP + ATP = a tRNA with a 3' CCACCA end + 3 diphosphate. Its function is as follows. Catalyzes the addition and repair of the essential 3'-terminal CCA sequence in tRNAs without using a nucleic acid template. Adds these three nucleotides in the order of C, C, and A to the tRNA nucleotide-73, using CTP and ATP as substrates and producing inorganic pyrophosphate. tRNA 3'-terminal CCA addition is required both for tRNA processing and repair. Also involved in tRNA surveillance by mediating tandem CCA addition to generate a CCACCA at the 3' terminus of unstable tRNAs. While stable tRNAs receive only 3'-terminal CCA, unstable tRNAs are marked with CCACCA and rapidly degraded. The polypeptide is Multifunctional CCA protein (Burkholderia mallei (strain NCTC 10247)).